The following is a 162-amino-acid chain: MRLVEIGRFGAPYALKGGLRFRGEPVVLHLERVYVEGHGWRAIEDLYRVGEELVVHLAGVTDRTLAEALVGLRVYAEVADLPPLEEGRYYYFALIGLPVYVEGRQVGEVVDILDAGAQDVLIIRGVGERLRDRAERLVPLQAPYVRVEEGGIHVDPIPGLFD.

The PRC barrel domain occupies 86–160 (EGRYYYFALI…GIHVDPIPGL (75 aa)).

It belongs to the RimM family. Binds ribosomal protein uS19.

It localises to the cytoplasm. An accessory protein needed during the final step in the assembly of 30S ribosomal subunit, possibly for assembly of the head region. Essential for efficient processing of 16S rRNA. May be needed both before and after RbfA during the maturation of 16S rRNA. It has affinity for free ribosomal 30S subunits but not for 70S ribosomes. This is Ribosome maturation factor RimM from Thermus thermophilus (strain ATCC BAA-163 / DSM 7039 / HB27).